Reading from the N-terminus, the 619-residue chain is Sodium-coupled monocarboxylate transporter 2 (619 aa).

Topologically, residues 1–9 (MRVKNFEAW) are extracellular. A helical transmembrane segment spans residues 10-30 (DYVVFAGLFVISSGIGVFFAI). The Cytoplasmic portion of the chain corresponds to 31–47 (KERKKTTSREFLVGGRQ). The helical transmembrane segment at 48–68 (MSFGPVALSLTASFMSAVTVL) threads the bilayer. Topologically, residues 69–80 (GTPAEVYRFGAS) are extracellular. A helical membrane pass occupies residues 81 to 101 (FFLFLISYVFVVFFTSELFLP). Over 102 to 128 (VFYRSGITSTYEYLQLRFNKPVRYAAT) the chain is Cytoplasmic. Residues 129-149 (IIYIVQTILYTGVVVYAPALA) traverse the membrane as a helical segment. Over 150–157 (LNQVTGFN) the chain is Extracellular. A helical transmembrane segment spans residues 158–178 (LWASVFATGIVCTFYCSLGGL). Residues 179–180 (KA) lie on the Cytoplasmic side of the membrane. The chain crosses the membrane as a helical span at residues 181-201 (VVWTDAFQMVVMIVGFLTVLI). The Extracellular segment spans residues 202-235 (QGSNHVGGFNNVLEKAGNGSRLHIVDFDVDPLRR). Asn-219 carries an N-linked (GlcNAc...) asparagine glycan. A helical transmembrane segment spans residues 236 to 256 (HTFWTITIGGTFTWLGVYGVN). The Cytoplasmic segment spans residues 257–275 (QSTIQRCISCKTEKHAKLA). A helical transmembrane segment spans residues 276-296 (LYFNLLGLWIIVACAVFSGLI). Over 297-321 (MYSHFKDCDPWTSGVISAPDQLMPY) the chain is Extracellular. Residues 322 to 342 (FVMEIFATMPGLPGLFVACAF) form a helical membrane-spanning segment. Topologically, residues 343–385 (SGTLSTVAASINALATVTFEDFVKSCFPHLSDKLSTWISKGLC) are cytoplasmic. The helical transmembrane segment at 386 to 406 (ILFGIMCTSMAVVASLMGSVV) threads the bilayer. Residues 407–411 (QAALS) lie on the Extracellular side of the membrane. The chain crosses the membrane as a helical span at residues 412–432 (IHGMCGGPMLGLFTLGLVFPF). Residues 433–437 (VNWKG) lie on the Cytoplasmic side of the membrane. A helical membrane pass occupies residues 438-458 (ALGGLLTGITLSFWVAIGSFI). Residues 459-504 (YPAPESKTLPLPLSTEHCVELNITTTVAPQISSRPVLADTWYSLSY) lie on the Extracellular side of the membrane. Asn-480 is a glycosylation site (N-linked (GlcNAc...) asparagine). Residues 505–525 (LYFSAVGCLGCIAAGIIISFL) form a helical membrane-spanning segment. At 526–619 (TGKQRGKDID…NSVPEKTTYF (94 aa)) the chain is on the cytoplasmic side.

This sequence belongs to the sodium:solute symporter (SSF) (TC 2.A.21) family. Expressed in the cortical region of the kidney corresponding to the proximal tubule. Expressed in Mueller cells of the inner retina (at protein level). Isoform 1 is expressed in the retina, kidney, small intestine and skeletal muscle. Isoform 2 is not detected in the kidney, small intestine and skeletal muscle. In the kidney, expressed predominantly in tubular epithelial cells of the cortical region and in the convoluted portions of the proximal tubule (pars convoluta). In the small intestine, its expression is highest in the proximal part and gradually decreased towards the distal end. Expressed in the neural retina. Not detected in the caecum and colon.

Its subcellular location is the apical cell membrane. The enzyme catalyses (S)-lactate(out) + Na(+)(out) = (S)-lactate(in) + Na(+)(in). It carries out the reaction nicotinate(out) + Na(+)(out) = nicotinate(in) + Na(+)(in). The catalysed reaction is pyruvate(out) + Na(+)(out) = pyruvate(in) + Na(+)(in). It catalyses the reaction propanoate(out) + Na(+)(out) = propanoate(in) + Na(+)(in). The enzyme catalyses butanoate(out) + Na(+)(out) = butanoate(in) + Na(+)(in). It carries out the reaction acetoacetate(out) + Na(+)(out) = acetoacetate(in) + Na(+)(in). Functionally, acts as an electroneutral and low-affinity sodium (Na(+))-dependent sodium-coupled solute transporter. Catalyzes the transport across the plasma membrane of many monocarboxylates such as lactate, pyruvate, nicotinate, propionate, butyrate and beta-D-hydroxybutyrate. May be responsible for the first step of reabsorption of monocarboxylates from the lumen of the proximal tubule of the kidney and the small intestine. May play also a role in monocarboxylates transport in the retina. Mediates electroneutral uptake of lactate, with a stoichiometry of 2 Na(+) for each lactate. The chain is Sodium-coupled monocarboxylate transporter 2 (Slc5a12) from Mus musculus (Mouse).